The sequence spans 276 residues: 3-methyl-2-oxobutanoate hydroxymethyltransferase (276 aa).

2 residues coordinate Mg(2+): Asp-46 and Asp-85. 3-methyl-2-oxobutanoate contacts are provided by residues Asp-46 to Ser-47, Asp-85, and Lys-115. Position 117 (Glu-117) interacts with Mg(2+). Glu-184 acts as the Proton acceptor in catalysis.

It belongs to the PanB family. In terms of assembly, homodecamer; pentamer of dimers. Mg(2+) serves as cofactor.

Its subcellular location is the cytoplasm. It carries out the reaction 3-methyl-2-oxobutanoate + (6R)-5,10-methylene-5,6,7,8-tetrahydrofolate + H2O = 2-dehydropantoate + (6S)-5,6,7,8-tetrahydrofolate. It participates in cofactor biosynthesis; (R)-pantothenate biosynthesis; (R)-pantoate from 3-methyl-2-oxobutanoate: step 1/2. In terms of biological role, catalyzes the reversible reaction in which hydroxymethyl group from 5,10-methylenetetrahydrofolate is transferred onto alpha-ketoisovalerate to form ketopantoate. The protein is 3-methyl-2-oxobutanoate hydroxymethyltransferase of Heliobacterium modesticaldum (strain ATCC 51547 / Ice1).